We begin with the raw amino-acid sequence, 311 residues long: Olfactory receptor 6C3 (311 aa).

Topologically, residues 1 to 22 (MNHTMVTEFVLLGLSDDPDLQI) are extracellular. A glycan (N-linked (GlcNAc...) asparagine) is linked at N2. The chain crosses the membrane as a helical span at residues 23–43 (VIFLFLFITYILSVTGNLTII). Residues 44-51 (TLTFVDSH) lie on the Cytoplasmic side of the membrane. The helical transmembrane segment at 52–72 (LQTPMYFFLRNFSFLEISFTT) threads the bilayer. The Extracellular segment spans residues 73–96 (VCIPRFLGAIITRNKTISYNNCAA). Residues C94 and C186 are joined by a disulfide bond. The helical transmembrane segment at 97-117 (QLFFFIFMGVTEFYILTAMSY) threads the bilayer. Topologically, residues 118-136 (DRYVAICKPLHYTSIMNRK) are cytoplasmic. Residues 137-157 (LCTLLVLCAWLSGFLTIFPPL) traverse the membrane as a helical segment. The Extracellular segment spans residues 158-194 (MLLLQLDYCASNVIDHFACDYFPLLQLSCSDTWLLEV). The chain crosses the membrane as a helical span at residues 195-214 (IGFYFALVTLLFTLALVILS). Topologically, residues 215-234 (YMYIIRTILRIPSASQRKKA) are cytoplasmic. Residues 235 to 255 (FSTCSSHMIVISISYGSCIFM) form a helical membrane-spanning segment. Over 256–268 (YANPSAKEKASLT) the chain is Extracellular. Residues 269–289 (KGIAILNTSVAPMLNPFIYTL) traverse the membrane as a helical segment. Over 290–311 (RNQQVKQAFKNVVHKVVFYANQ) the chain is Cytoplasmic.

Belongs to the G-protein coupled receptor 1 family.

It is found in the cell membrane. Its function is as follows. Odorant receptor. The sequence is that of Olfactory receptor 6C3 (OR6C3) from Homo sapiens (Human).